The following is a 545-amino-acid chain: CTP synthase (545 aa).

The segment at 1–266 (MTTNYIFVTG…DDYICKRFSL (266 aa)) is amidoligase domain. Serine 14 lines the CTP pocket. Residue serine 14 participates in UTP binding. Residues 15-20 (SLGKGI) and aspartate 72 contribute to the ATP site. Mg(2+) contacts are provided by aspartate 72 and glutamate 140. Residues 147–149 (DIE), 187–192 (KTKPTQ), and lysine 223 each bind CTP. UTP-binding positions include 187-192 (KTKPTQ) and lysine 223. 239-241 (KDV) serves as a coordination point for ATP. The Glutamine amidotransferase type-1 domain maps to 291-542 (TIGMVGKYIE…VKAANEHQKR (252 aa)). Glycine 352 is an L-glutamine binding site. Cysteine 379 functions as the Nucleophile; for glutamine hydrolysis in the catalytic mechanism. Residues 380–383 (LGMQ), glutamate 403, and arginine 470 contribute to the L-glutamine site. Residues histidine 515 and glutamate 517 contribute to the active site.

Belongs to the CTP synthase family. As to quaternary structure, homotetramer.

It carries out the reaction UTP + L-glutamine + ATP + H2O = CTP + L-glutamate + ADP + phosphate + 2 H(+). The enzyme catalyses L-glutamine + H2O = L-glutamate + NH4(+). The catalysed reaction is UTP + NH4(+) + ATP = CTP + ADP + phosphate + 2 H(+). Its pathway is pyrimidine metabolism; CTP biosynthesis via de novo pathway; CTP from UDP: step 2/2. Allosterically activated by GTP, when glutamine is the substrate; GTP has no effect on the reaction when ammonia is the substrate. The allosteric effector GTP functions by stabilizing the protein conformation that binds the tetrahedral intermediate(s) formed during glutamine hydrolysis. Inhibited by the product CTP, via allosteric rather than competitive inhibition. Functionally, catalyzes the ATP-dependent amination of UTP to CTP with either L-glutamine or ammonia as the source of nitrogen. Regulates intracellular CTP levels through interactions with the four ribonucleotide triphosphates. The chain is CTP synthase from Salmonella paratyphi A (strain ATCC 9150 / SARB42).